The sequence spans 276 residues: Putative oxidoreductase SadH (276 aa).

Residue Ser142 participates in substrate binding. The active-site Proton acceptor is Tyr155.

The protein belongs to the short-chain dehydrogenases/reductases (SDR) family.

Its function is as follows. Required for maintaining the appropriate mycolic acid composition and permeability of the envelope on its exposure to acidic pH. The protein is Putative oxidoreductase SadH (sadH) of Mycobacterium tuberculosis (strain CDC 1551 / Oshkosh).